Here is a 98-residue protein sequence, read N- to C-terminus: Aspartyl/glutamyl-tRNA(Asn/Gln) amidotransferase subunit C (98 aa).

The protein belongs to the GatC family. In terms of assembly, heterotrimer of A, B and C subunits.

The catalysed reaction is L-glutamyl-tRNA(Gln) + L-glutamine + ATP + H2O = L-glutaminyl-tRNA(Gln) + L-glutamate + ADP + phosphate + H(+). The enzyme catalyses L-aspartyl-tRNA(Asn) + L-glutamine + ATP + H2O = L-asparaginyl-tRNA(Asn) + L-glutamate + ADP + phosphate + 2 H(+). Its function is as follows. Allows the formation of correctly charged Asn-tRNA(Asn) or Gln-tRNA(Gln) through the transamidation of misacylated Asp-tRNA(Asn) or Glu-tRNA(Gln) in organisms which lack either or both of asparaginyl-tRNA or glutaminyl-tRNA synthetases. The reaction takes place in the presence of glutamine and ATP through an activated phospho-Asp-tRNA(Asn) or phospho-Glu-tRNA(Gln). The chain is Aspartyl/glutamyl-tRNA(Asn/Gln) amidotransferase subunit C from Microcystis aeruginosa (strain NIES-843 / IAM M-2473).